The primary structure comprises 944 residues: Translation initiation factor IF-2 (944 aa).

2 disordered regions span residues 50-91 (SAKT…FAGK) and 114-349 (KVEV…VPAT). 4 stretches are compositionally biased toward basic and acidic residues: residues 75-86 (ESAKKNKEDHPR), 124-157 (VVTE…ETKD), 164-185 (AEVK…EKKK), and 199-233 (KRAE…DNRR). The segment covering 267 to 280 (SSGSAPATDSFTPA) has biased composition (polar residues). The segment covering 286–307 (SRRDRDRKKSDNNRDNTKDGNR) has biased composition (basic and acidic residues). 2 stretches are compositionally biased toward polar residues: residues 317–331 (NRNQ…NWNQ) and 338–348 (YQNNQSSSVPA). The tr-type G domain occupies 443–614 (ERPAVVTIMG…LLVAEVQELK (172 aa)). The tract at residues 452 to 459 (GHVDHGKT) is G1. 452–459 (GHVDHGKT) contributes to the GTP binding site. A G2 region spans residues 477-481 (GITQH). Residues 498–501 (DTPG) form a G3 region. Residues 498-502 (DTPGH) and 552-555 (NKID) contribute to the GTP site. A G4 region spans residues 552–555 (NKID). Positions 590–592 (SAK) are G5.

Belongs to the TRAFAC class translation factor GTPase superfamily. Classic translation factor GTPase family. IF-2 subfamily.

The protein localises to the cytoplasm. Its function is as follows. One of the essential components for the initiation of protein synthesis. Protects formylmethionyl-tRNA from spontaneous hydrolysis and promotes its binding to the 30S ribosomal subunits. Also involved in the hydrolysis of GTP during the formation of the 70S ribosomal complex. This is Translation initiation factor IF-2 (infB) from Lactococcus lactis subsp. lactis (strain IL1403) (Streptococcus lactis).